The sequence spans 175 residues: Disulfide bond formation protein B 2 (175 aa).

Residues 1–9 (MYLARTRFL) are Cytoplasmic-facing. A helical membrane pass occupies residues 10-26 (FFLASLACASIIGVAFY). Over 27-44 (LQQAVGLDPCTLCMVQRA) the chain is Periplasmic. C36 and C39 are oxidised to a cystine. A helical membrane pass occupies residues 45-61 (AFIACGVLALCAACHAP). Residues 62–68 (GPTGTRR) lie on the Cytoplasmic side of the membrane. A helical transmembrane segment spans residues 69 to 85 (YSLGLLLVALAGLAGAG). Topologically, residues 86–142 (TQVWLQTASADQLIPFITRLEQILSLLSLDMCIDRLRSDALFCAEITWTLFGISLPE) are periplasmic. Residues 143–161 (WSLLAFTGLALLPLYPLFS) traverse the membrane as a helical segment. The Cytoplasmic segment spans residues 162–175 (ELSHWLATRDRGGY).

Belongs to the DsbB family.

The protein localises to the cell inner membrane. Functionally, required for disulfide bond formation in some periplasmic proteins. Acts by oxidizing the DsbA protein. The polypeptide is Disulfide bond formation protein B 2 (Pseudomonas syringae pv. syringae (strain B728a)).